Consider the following 785-residue polypeptide: Mitochondrial intermediate peptidase (785 aa).

The N-terminal 26 residues, 1–26 (MLKVTTSRPWVCSRCVRRQVQSRRRL), are a transit peptide targeting the mitochondrion. The disordered stretch occupies residues 26 to 51 (LATASTQYRESRPVPVDNSAPGAKRD). His-566 serves as a coordination point for Zn(2+). The active site involves Glu-567. His-570 and His-573 together coordinate Zn(2+).

Belongs to the peptidase M3 family. It depends on Zn(2+) as a cofactor.

Its subcellular location is the mitochondrion matrix. The catalysed reaction is Release of an N-terminal octapeptide as second stage of processing of some proteins imported into the mitochondrion.. Its function is as follows. Cleaves proteins, imported into the mitochondrion, to their mature size. While most mitochondrial precursor proteins are processed to the mature form in one step by mitochondrial processing peptidase (MPP), the sequential cleavage by MIP of an octapeptide after initial processing by MPP is a required step for a subgroup of nuclear-encoded precursor proteins destined for the matrix or the inner membrane. The polypeptide is Mitochondrial intermediate peptidase (oct1) (Botryotinia fuckeliana (strain B05.10) (Noble rot fungus)).